Here is a 140-residue protein sequence, read N- to C-terminus: MERTLTILKPDCVRKQLIGAVTNMIERAGFRIVAMKKTRLTKETAGAFYAVHKERPFYGELVEFMSSGPCVPMILEKENAVADFRTLIGATDPAQADEGTIRKLYADSKGENIIHGSDSAENAAIESAFFFAAEEVVRVD.

ATP is bound by residues lysine 9, phenylalanine 57, arginine 85, threonine 91, arginine 102, and asparagine 112. Catalysis depends on histidine 115, which acts as the Pros-phosphohistidine intermediate.

The protein belongs to the NDK family. In terms of assembly, homotetramer. Mg(2+) serves as cofactor.

The protein resides in the cytoplasm. The catalysed reaction is a 2'-deoxyribonucleoside 5'-diphosphate + ATP = a 2'-deoxyribonucleoside 5'-triphosphate + ADP. It carries out the reaction a ribonucleoside 5'-diphosphate + ATP = a ribonucleoside 5'-triphosphate + ADP. Its function is as follows. Major role in the synthesis of nucleoside triphosphates other than ATP. The ATP gamma phosphate is transferred to the NDP beta phosphate via a ping-pong mechanism, using a phosphorylated active-site intermediate. This Chlorobaculum tepidum (strain ATCC 49652 / DSM 12025 / NBRC 103806 / TLS) (Chlorobium tepidum) protein is Nucleoside diphosphate kinase.